The sequence spans 314 residues: Oxidoreductase NAD-binding domain-containing protein 1 (314 aa).

The N-terminal stretch at 1–18 (MALVAGSAAYQVLRGVTG) is a signal peptide. Residues 63 to 166 (EIISPAKVCE…VGGEFCFDPQ (104 aa)) form the FAD-binding FR-type domain. 180-185 (GVGINP) provides a ligand contact to NAD(+).

The sequence is that of Oxidoreductase NAD-binding domain-containing protein 1 (oxnad1) from Xenopus tropicalis (Western clawed frog).